Consider the following 95-residue polypeptide: Aspartyl/glutamyl-tRNA(Asn/Gln) amidotransferase subunit C (95 aa).

This sequence belongs to the GatC family. As to quaternary structure, heterotrimer of A, B and C subunits.

It carries out the reaction L-glutamyl-tRNA(Gln) + L-glutamine + ATP + H2O = L-glutaminyl-tRNA(Gln) + L-glutamate + ADP + phosphate + H(+). The enzyme catalyses L-aspartyl-tRNA(Asn) + L-glutamine + ATP + H2O = L-asparaginyl-tRNA(Asn) + L-glutamate + ADP + phosphate + 2 H(+). Its function is as follows. Allows the formation of correctly charged Asn-tRNA(Asn) or Gln-tRNA(Gln) through the transamidation of misacylated Asp-tRNA(Asn) or Glu-tRNA(Gln) in organisms which lack either or both of asparaginyl-tRNA or glutaminyl-tRNA synthetases. The reaction takes place in the presence of glutamine and ATP through an activated phospho-Asp-tRNA(Asn) or phospho-Glu-tRNA(Gln). The sequence is that of Aspartyl/glutamyl-tRNA(Asn/Gln) amidotransferase subunit C from Campylobacter lari (strain RM2100 / D67 / ATCC BAA-1060).